The chain runs to 1038 residues: MKVLGEASSYPYRSCIIVVFLSVSLFWLRPSTYHPQQQNLNPENVTRLESENETKTNYIIRFKQYKPAKDHRIYLESKVRSGGWGWIERINPATKYPTDFGVLWIEESGKEAVVGEIERLEMVKDVNVEFKYQRVLLGGSFPDGKKRPGKIFTSMSFEEGTESSPMADTSNTTLNWSRHLLAQKTQVTSMFGADHLWKKGYTGAKVKMAIFDTGIRADHPHFRKIKERTNWTNEDTLNDNLGHGTFVAGVIAGRNPECLGFASDTEIYAFRVFTDAQVSYTSWFLDAFNYAIATDMDVLNLSIGGPDYLDLPFVEKVWEITASNIIMVSAIGNDGPLYGTLNNPADQSDVIGVGGIDNDDHIASFSSRGMSTWELPHGYGRVKPDVVAYGRDIMGSKISTGCKSLSGTSVASPVVAGIVCLLVSVIPEARRKDLLNPASMKQALVEGAAKLSGPNMYEQGAGRVDLLESYEILKSYHPRASIFPSILDYNDCPYSWPFCRQPLYAGAMPIIFNTTILNGMGVIGYIESPPTWHPANEEGNLLSIHFKYPDVIWPWTGYLALHMQIKEEGAQFTGEIEGNVTVKVYSPPASGESGPRRSTCSLQLKLKVIPTPPRAKRILWDQFHSIKYPPGYIPRDSLDVRNDILDWHGDHLHTNFHIMYNMLRDAGYYIETLGSPLTCFDAQQYGTLLMVDLEDDYFPEEIEKLRDDVINTGLGLVVFAEWYNVDTMVKMRFFDDNTRSWWTPVTGGANIPALNNLLASFGIAFGDKILNGDFSIDGEQSRYASGTNIVRFPAGGFLHTFPLLDSSESGATQNLLLTEASKEDPAVLGLLEIGEGRVGVYGDSNCLDSSHMVTNCYWLLKKMLDFSSSNIKDPVLFSKFAKRYSPVIIDEKQLPSRRTDVNFSTYSSVIGKELICESDSRFEVWGTKGYNLHVRGRNRRLPGYHGIDLGRGLNFTVESKRPTRWRSAKEGGELSSSRSKSLGGLFNRDEIDMPFLVPTRWIVLAGVVASGVLVLLSIWRIRQKRGRRRRASGSNRLA.

A signal peptide spans 1–30; it reads MKVLGEASSYPYRSCIIVVFLSVSLFWLRP. A propeptide spans 31 to 181 (removed in mature form); that stretch reads STYHPQQQNL…TTLNWSRHLL (151 aa). N-linked (GlcNAc...) asparagine glycans are attached at residues asparagine 44, asparagine 52, asparagine 171, and asparagine 175. The Peptidase S8 domain occupies 175-473; the sequence is NWSRHLLAQK…VDLLESYEIL (299 aa). The Lumenal segment spans residues 182-1000; that stretch reads AQKTQVTSMF…IDMPFLVPTR (819 aa). Catalysis depends on aspartate 212, which acts as the Charge relay system. N-linked (GlcNAc...) asparagine glycosylation occurs at asparagine 230. Histidine 243 acts as the Charge relay system in catalysis. Asparagine 300 carries an N-linked (GlcNAc...) asparagine glycan. Serine 409 functions as the Charge relay system in the catalytic mechanism. Asparagine 513, asparagine 579, asparagine 902, and asparagine 954 each carry an N-linked (GlcNAc...) asparagine glycan. The chain crosses the membrane as a helical span at residues 1001 to 1021; sequence WIVLAGVVASGVLVLLSIWRI. The Cytoplasmic portion of the chain corresponds to 1022-1038; sequence RQKRGRRRRASGSNRLA.

This sequence belongs to the peptidase S8 family. In terms of assembly, interacts with PME1 and PME5. Expressed in the vasculature of roots, cotyledons and leaves.

It localises to the golgi apparatus membrane. Its function is as follows. Serine protease that catalyzes the first step (site-1 cleavage) in the proteolytic activation of various factors, prior to site-2 cleavage. Part of a regulated intramembrane proteolysis (RIP) cascade. Cleaves BZIP17 and BZIP28 after the Arg-Arg-Ile-Leu (RRIL) motif. May cleave BZIP49 after the RRIL motif. Targets the membrane-associated BZIP17 factor, which functions as a stress sensor and transducer in a signaling pathway that resembles an ER stress response. Following salt stress, BZIP17 is cleaved by SBT6.1 (S1P) and S2P at the C-terminus and the N-terminal bZIP component is translocated to the nucleus, where it activates the expression of salt stress response genes. Cleaves the pectinesterases PME1 after the Arg-Arg-Leu-Met (RRLM) and Arg-Arg-Leu-Leu (RRLL) motifs, and PME5 after the Arg-Arg-Leu-Leu (RRLL) and Arg-Lys-Leu-Met (RKLM) motifs. This processing and C-terminus release occurs in the Golgi apparatus and is required for cell wall targeting of pectinesterases. Thus, SBT6.1 mediates the regulated release of mature pectinesterases from the Golgi. Cleaves the peptide growth factor RALF23 after the Arg-Arg-Ile-Leu (RRIL) motif. This processing is required for RALF23 function in the negative regulation of brassinolide (BL)-mediated signaling pathway (e.g. BL-induced hypocotyl elongation and branching limitation). This Arabidopsis thaliana (Mouse-ear cress) protein is Subtilisin-like protease SBT6.1.